The primary structure comprises 69 residues: DNA-directed RNA polymerase subunit epsilon (69 aa).

Belongs to the RNA polymerase subunit epsilon family. As to quaternary structure, RNAP is composed of a core of 2 alpha, a beta and a beta' subunit. The core is associated with a delta subunit, and at least one of epsilon or omega. When a sigma factor is associated with the core the holoenzyme is formed, which can initiate transcription.

It carries out the reaction RNA(n) + a ribonucleoside 5'-triphosphate = RNA(n+1) + diphosphate. In terms of biological role, a non-essential component of RNA polymerase (RNAP). This is DNA-directed RNA polymerase subunit epsilon from Bacillus pumilus (strain SAFR-032).